A 361-amino-acid polypeptide reads, in one-letter code: Chorismate synthase (361 aa).

Position 47 (Arg47) interacts with NADP(+). FMN contacts are provided by residues 124–126 (RAS), Gly286, 301–305 (KPTAT), and Arg327.

It belongs to the chorismate synthase family. Homotetramer. Requires FMNH2 as cofactor.

The enzyme catalyses 5-O-(1-carboxyvinyl)-3-phosphoshikimate = chorismate + phosphate. Its pathway is metabolic intermediate biosynthesis; chorismate biosynthesis; chorismate from D-erythrose 4-phosphate and phosphoenolpyruvate: step 7/7. Its function is as follows. Catalyzes the anti-1,4-elimination of the C-3 phosphate and the C-6 proR hydrogen from 5-enolpyruvylshikimate-3-phosphate (EPSP) to yield chorismate, which is the branch point compound that serves as the starting substrate for the three terminal pathways of aromatic amino acid biosynthesis. This reaction introduces a second double bond into the aromatic ring system. The sequence is that of Chorismate synthase from Akkermansia muciniphila (strain ATCC BAA-835 / DSM 22959 / JCM 33894 / BCRC 81048 / CCUG 64013 / CIP 107961 / Muc).